Reading from the N-terminus, the 610-residue chain is Phosphomethylpyrimidine synthase (610 aa).

Substrate contacts are provided by residues asparagine 216, methionine 245, tyrosine 274, histidine 310, 330–332, 371–374, and glutamate 410; these read SRG and DGLR. Histidine 414 serves as a coordination point for Zn(2+). Tyrosine 437 provides a ligand contact to substrate. A Zn(2+)-binding site is contributed by histidine 478. Cysteine 558, cysteine 561, and cysteine 566 together coordinate [4Fe-4S] cluster.

This sequence belongs to the ThiC family. In terms of assembly, homodimer. [4Fe-4S] cluster serves as cofactor.

The enzyme catalyses 5-amino-1-(5-phospho-beta-D-ribosyl)imidazole + S-adenosyl-L-methionine = 4-amino-2-methyl-5-(phosphooxymethyl)pyrimidine + CO + 5'-deoxyadenosine + formate + L-methionine + 3 H(+). The protein operates within cofactor biosynthesis; thiamine diphosphate biosynthesis. Catalyzes the synthesis of the hydroxymethylpyrimidine phosphate (HMP-P) moiety of thiamine from aminoimidazole ribotide (AIR) in a radical S-adenosyl-L-methionine (SAM)-dependent reaction. In Allorhizobium ampelinum (strain ATCC BAA-846 / DSM 112012 / S4) (Agrobacterium vitis (strain S4)), this protein is Phosphomethylpyrimidine synthase.